Consider the following 310-residue polypeptide: 4-hydroxy-3-methylbut-2-enyl diphosphate reductase (310 aa).

[4Fe-4S] cluster is bound at residue C12. Positions 41 and 74 each coordinate (2E)-4-hydroxy-3-methylbut-2-enyl diphosphate. Residues H41 and H74 each contribute to the dimethylallyl diphosphate site. Isopentenyl diphosphate-binding residues include H41 and H74. Residue C96 coordinates [4Fe-4S] cluster. H124 contributes to the (2E)-4-hydroxy-3-methylbut-2-enyl diphosphate binding site. H124 provides a ligand contact to dimethylallyl diphosphate. Isopentenyl diphosphate is bound at residue H124. Catalysis depends on E126, which acts as the Proton donor. T167 serves as a coordination point for (2E)-4-hydroxy-3-methylbut-2-enyl diphosphate. C197 contributes to the [4Fe-4S] cluster binding site. 4 residues coordinate (2E)-4-hydroxy-3-methylbut-2-enyl diphosphate: S225, S226, N227, and S269. Residues S225, S226, N227, and S269 each contribute to the dimethylallyl diphosphate site. Residues S225, S226, N227, and S269 each coordinate isopentenyl diphosphate.

This sequence belongs to the IspH family. [4Fe-4S] cluster is required as a cofactor.

The catalysed reaction is isopentenyl diphosphate + 2 oxidized [2Fe-2S]-[ferredoxin] + H2O = (2E)-4-hydroxy-3-methylbut-2-enyl diphosphate + 2 reduced [2Fe-2S]-[ferredoxin] + 2 H(+). The enzyme catalyses dimethylallyl diphosphate + 2 oxidized [2Fe-2S]-[ferredoxin] + H2O = (2E)-4-hydroxy-3-methylbut-2-enyl diphosphate + 2 reduced [2Fe-2S]-[ferredoxin] + 2 H(+). It participates in isoprenoid biosynthesis; dimethylallyl diphosphate biosynthesis; dimethylallyl diphosphate from (2E)-4-hydroxy-3-methylbutenyl diphosphate: step 1/1. Its pathway is isoprenoid biosynthesis; isopentenyl diphosphate biosynthesis via DXP pathway; isopentenyl diphosphate from 1-deoxy-D-xylulose 5-phosphate: step 6/6. Catalyzes the conversion of 1-hydroxy-2-methyl-2-(E)-butenyl 4-diphosphate (HMBPP) into a mixture of isopentenyl diphosphate (IPP) and dimethylallyl diphosphate (DMAPP). Acts in the terminal step of the DOXP/MEP pathway for isoprenoid precursor biosynthesis. This is 4-hydroxy-3-methylbut-2-enyl diphosphate reductase from Tolumonas auensis (strain DSM 9187 / NBRC 110442 / TA 4).